Here is a 558-residue protein sequence, read N- to C-terminus: Hsp70-Hsp90 organizing protein 3 (558 aa).

4 TPR repeats span residues 2–35 (AEEA…SPTN), 37–69 (ILYS…KPDW), 70–103 (SKGY…DPSN), and 136–173 (EKLT…YMKD). One can recognise an STI1 1 domain in the interval 131-170 (GKEMWEKLTADPGTRVYLEQDDFVKTMKEIQRNPNNLNLY). Positions 191–232 (SSGEDTEMKEADERKEPEPEMEPMELTEEERQKKERKEKALK) are disordered. Basic and acidic residues predominate over residues 196 to 208 (TEMKEADERKEPE). Over residues 209–218 (PEMEPMELTE) the composition is skewed to acidic residues. The span at 219–232 (EERQKKERKEKALK) shows a compositional bias: basic and acidic residues. Positions 227–244 (KEKALKEKGEGNVAYKKK) match the Bipartite nuclear localization signal motif. 6 TPR repeats span residues 230-263 (ALKE…DDED), 265-297 (SYLT…GREL), 305-342 (ARAL…HRNP), 369-402 (AEEE…NPND), 404-436 (RAYS…DPSF), and 437-470 (TKGY…DPKN). The STI1 2 domain occupies 507–546 (DPEVQNILSDPVMRQVLVDFQENPKAAQEHMKNPMVMNKI).

Co-chaperone that forms a complex with HSP70 and HSP90 and preproteins (e.g. chloroplast preproteins). Phosphorylated. In terms of processing, acetylated.

It localises to the cytoplasm. Its subcellular location is the nucleus. Mediates the association of the molecular chaperones HSP70 and HSP90. Mediates nuclear encoded chloroplast preproteins binding to HSP90 prior to chloroplastic sorting. Involved in acclimation to heat. In Arabidopsis thaliana (Mouse-ear cress), this protein is Hsp70-Hsp90 organizing protein 3 (HOP3).